The sequence spans 1245 residues: Nidogen-1 (1245 aa).

A signal peptide spans 1 to 28; sequence MLDASGCSWAMWTWALLQLLLLVGPGGC. One can recognise an NIDO domain in the interval 106–268; the sequence is PFLADLDTTD…GVWVFEIGSP (163 aa). Residue N187 is glycosylated (N-linked (GlcNAc...) asparagine). Sulfotyrosine is present on residues Y290 and Y295. Residue T299 is glycosylated (O-linked (GalNAc...) threonine). The interval 307-344 is disordered; it reads VATPSPSHSPRRGYPDPHNVPRILSPGYEATERPRGVP. S331 is a glycosylation site (O-linked (GalNAc...) serine). T337 and T345 each carry an O-linked (GalNAc...) threonine glycan. An O-linked (GalNAc...) threonine; partial glycan is attached at T348. Residues 384 to 424 form the EGF-like 1 domain; sequence SQQTCANNRHQCSVHAECRDYATGFCCRCVANYTGNGRQCV. 19 cysteine pairs are disulfide-bonded: C388/C401, C395/C410, C409/C616, C412/C423, C670/C683, C677/C693, C695/C706, C712/C725, C719/C734, C736/C748, C760/C775, C767/C785, C787/C798, C804/C815, C809/C824, C826/C837, C847/C876, C887/C894, and C896/C917. N415 carries N-linked (GlcNAc...) asparagine glycosylation. Positions 428 to 665 constitute a Nidogen G2 beta-barrel domain; that stretch reads SPQRVNGKVK…GPVRDGSPDA (238 aa). The EGF-like 2 domain occupies 666–707; sequence LQNPCYIGTHGCDSNAACRPGPGTQFTCECSIGFRGDGQTCY. The Cell attachment site motif lies at 700–702; sequence RGD. An EGF-like 3; calcium-binding domain is found at 708-749; the sequence is DIDECSEQPSRCGNHAVCNNLPGTFRCECVEGYHFSDRGTCV. Residues 756–799 form the EGF-like 4 domain; it reads PINYCETGLHNCDIPQRAQCIYMGGSSYTCSCLPGFSGDGRACR. In terms of domain architecture, EGF-like 5; calcium-binding spans 800 to 838; sequence DVDECQHSRCHPDAFCYNTPGSFTCQCKPGYQGDGFRCM. One can recognise a Thyroglobulin type-1 domain in the interval 844–917; it reads KTRCQLEREH…RTPPGMRPPC (74 aa). T920 and T933 each carry an O-linked (GalNAc...) threonine glycan. 4 LDL-receptor class B repeats span residues 988–1030, 1031–1073, 1074–1118, and 1119–1160; these read KVVY…DHLG, RTIF…DPVR, GNLY…DAFS, and SQLC…YGKN. Residues 1206–1242 form the EGF-like 6 domain; that stretch reads GHNYCSVNNGGCTHLCLPTPGSRTCRCPDNTLGVDCI. Disulfide bonds link C1210-C1221, C1217-C1230, and C1232-C1241.

Interacts with FBLN1. Interacts with LGALS3BP. Interacts with PLXDC1. Interacts with SVEP1. In terms of processing, N- and O-glycosylated.

It is found in the secreted. The protein localises to the extracellular space. Its subcellular location is the extracellular matrix. It localises to the basement membrane. Functionally, sulfated glycoprotein widely distributed in basement membranes and tightly associated with laminin. Also binds to collagen IV and perlecan. It probably has a role in cell-extracellular matrix interactions. This chain is Nidogen-1 (Nid1), found in Mus musculus (Mouse).